The sequence spans 110 residues: Iron-sulfur cluster assembly protein CyaY (110 aa).

This sequence belongs to the frataxin family.

Its function is as follows. Involved in iron-sulfur (Fe-S) cluster assembly. May act as a regulator of Fe-S biogenesis. The protein is Iron-sulfur cluster assembly protein CyaY of Paracidovorax citrulli (strain AAC00-1) (Acidovorax citrulli).